A 737-amino-acid polypeptide reads, in one-letter code: Ribosome-releasing factor 2, mitochondrial (737 aa).

The N-terminal 29 residues, 1 to 29 (MLKYALHSGGMPRNRLLRQLSAHIFRRSY), are a transit peptide targeting the mitochondrion. Residues 31–310 (SNIRNIGILA…AVNTYLPAPE (280 aa)) enclose the tr-type G domain. GTP is bound by residues 40–47 (AHIDAGKT), 104–108 (DTPGH), and 158–161 (NKMD).

The protein belongs to the TRAFAC class translation factor GTPase superfamily. Classic translation factor GTPase family. EF-G/EF-2 subfamily.

The protein resides in the mitochondrion. Mitochondrial GTPase that mediates the disassembly of ribosomes from messenger RNA at the termination of mitochondrial protein biosynthesis. Not involved in the GTP-dependent ribosomal translocation step during translation elongation. The chain is Ribosome-releasing factor 2, mitochondrial from Drosophila pseudoobscura pseudoobscura (Fruit fly).